Here is a 458-residue protein sequence, read N- to C-terminus: Probable beta-eliminating lyase (458 aa).

K257 is subject to N6-(pyridoxal phosphate)lysine.

Belongs to the beta-eliminating lyase family. The cofactor is pyridoxal 5'-phosphate.

The polypeptide is Probable beta-eliminating lyase (Trichomonas vaginalis (strain ATCC PRA-98 / G3)).